The following is a 411-amino-acid chain: Probable glutamate dehydrogenase 3 (411 aa).

The active site involves K102.

This sequence belongs to the Glu/Leu/Phe/Val dehydrogenases family.

The catalysed reaction is L-glutamate + NAD(+) + H2O = 2-oxoglutarate + NH4(+) + NADH + H(+). It catalyses the reaction L-glutamate + NADP(+) + H2O = 2-oxoglutarate + NH4(+) + NADPH + H(+). In Arabidopsis thaliana (Mouse-ear cress), this protein is Probable glutamate dehydrogenase 3 (GSH3).